A 110-amino-acid chain; its full sequence is V-type proton ATPase subunit F (110 aa).

The protein belongs to the V-ATPase F subunit family. In terms of assembly, V-ATPase is a heteromultimeric enzyme made up of two complexes: the ATP-hydrolytic V1 complex and the proton translocation V0 complex. The V1 complex consists of three catalytic AB heterodimers that form a heterohexamer, three peripheral stalks each consisting of EG heterodimers, one central rotor including subunits D and F, and the regulatory subunits C and H. The proton translocation complex V0 consists of the proton transport subunit a, a ring of proteolipid subunits c9c'', rotary subunit d, subunits e and f, and two accessory subunits.

Functionally, subunit of the V1 complex of vacuolar(H+)-ATPase (V-ATPase), a multisubunit enzyme composed of a peripheral complex (V1) that hydrolyzes ATP and a membrane integral complex (V0) that translocates protons. V-ATPase is responsible for acidifying and maintaining the pH of intracellular compartments and in some cell types, is targeted to the plasma membrane, where it is responsible for acidifying the extracellular environment. This Xenopus laevis (African clawed frog) protein is V-type proton ATPase subunit F (atp6s14).